The following is a 167-amino-acid chain: SsrA-binding protein (167 aa).

It belongs to the SmpB family.

The protein resides in the cytoplasm. Required for rescue of stalled ribosomes mediated by trans-translation. Binds to transfer-messenger RNA (tmRNA), required for stable association of tmRNA with ribosomes. tmRNA and SmpB together mimic tRNA shape, replacing the anticodon stem-loop with SmpB. tmRNA is encoded by the ssrA gene; the 2 termini fold to resemble tRNA(Ala) and it encodes a 'tag peptide', a short internal open reading frame. During trans-translation Ala-aminoacylated tmRNA acts like a tRNA, entering the A-site of stalled ribosomes, displacing the stalled mRNA. The ribosome then switches to translate the ORF on the tmRNA; the nascent peptide is terminated with the 'tag peptide' encoded by the tmRNA and targeted for degradation. The ribosome is freed to recommence translation, which seems to be the essential function of trans-translation. The sequence is that of SsrA-binding protein from Stenotrophomonas maltophilia (strain K279a).